The sequence spans 394 residues: Elongation factor Tu 2 (394 aa).

One can recognise a tr-type G domain in the interval 10–204 (KPHVNVGTIG…FLDSYIPEPE (195 aa)). The tract at residues 19–26 (GHVDHGKT) is G1. 19-26 (GHVDHGKT) serves as a coordination point for GTP. Position 26 (Thr26) interacts with Mg(2+). A G2 region spans residues 60 to 64 (GITIN). The G3 stretch occupies residues 81–84 (DCPG). Residues 81–85 (DCPGH) and 136–139 (NKCD) each bind GTP. The tract at residues 136-139 (NKCD) is G4. The tract at residues 174-176 (SAL) is G5.

This sequence belongs to the TRAFAC class translation factor GTPase superfamily. Classic translation factor GTPase family. EF-Tu/EF-1A subfamily. As to quaternary structure, monomer.

Its subcellular location is the cytoplasm. It catalyses the reaction GTP + H2O = GDP + phosphate + H(+). GTP hydrolase that promotes the GTP-dependent binding of aminoacyl-tRNA to the A-site of ribosomes during protein biosynthesis. The polypeptide is Elongation factor Tu 2 (Shigella flexneri serotype 5b (strain 8401)).